Here is a 132-residue protein sequence, read N- to C-terminus: Small ribosomal subunit protein uS8 (132 aa).

It belongs to the universal ribosomal protein uS8 family. In terms of assembly, part of the 30S ribosomal subunit. Contacts proteins S5 and S12.

One of the primary rRNA binding proteins, it binds directly to 16S rRNA central domain where it helps coordinate assembly of the platform of the 30S subunit. In Bacillus anthracis (strain A0248), this protein is Small ribosomal subunit protein uS8.